We begin with the raw amino-acid sequence, 524 residues long: GMP synthase [glutamine-hydrolyzing] (524 aa).

The 190-residue stretch at Pro7–Ser196 folds into the Glutamine amidotransferase type-1 domain. The active-site Nucleophile is Cys84. Active-site residues include His170 and Glu172. The 202-residue stretch at Trp197–Arg398 folds into the GMPS ATP-PPase domain. Residue Ser224–Ala230 coordinates ATP.

In terms of assembly, homodimer.

It carries out the reaction XMP + L-glutamine + ATP + H2O = GMP + L-glutamate + AMP + diphosphate + 2 H(+). It participates in purine metabolism; GMP biosynthesis; GMP from XMP (L-Gln route): step 1/1. Catalyzes the synthesis of GMP from XMP. In Nocardia farcinica (strain IFM 10152), this protein is GMP synthase [glutamine-hydrolyzing].